The primary structure comprises 825 residues: NT-3 growth factor receptor (825 aa).

The first 31 residues, 1–31 (MDVSLCPAKCSFWRIFLLGSVWLDYVGSVLA), serve as a signal peptide directing secretion. Disulfide bonds link Cys-32/Cys-38 and Cys-36/Cys-45. The Extracellular portion of the chain corresponds to 32-429 (CPANCVCSKT…TVTHKPEEDT (398 aa)). N-linked (GlcNAc...) asparagine glycans are attached at residues Asn-68, Asn-72, and Asn-79. LRR repeat units lie at residues 104 to 125 (GLQKLTIKNSGLRSIQPRAFAK) and 128 to 149 (HLRYINLSSNRLTTLSWQLFQT). N-linked (GlcNAc...) asparagine glycosylation is found at Asn-133 and Asn-163. The LRRCT domain maps to 160-209 (NFFNCSCDIRWMQLWQEQGEARLNSQNLYCINADGSQLPLFRMNISQCDL). 2 cysteine pairs are disulfide-bonded: Cys-164–Cys-189 and Cys-166–Cys-207. N-linked (GlcNAc...) asparagine glycans are attached at residues Asn-203, Asn-218, Asn-232, Asn-259, Asn-267, Asn-272, and Asn-294. Ig-like C2-type domains follow at residues 210–300 (PEIS…VALT) and 309–382 (SLEE…IAKN). A disulfide bridge connects residues Cys-231 and Cys-284. The cysteines at positions 320 and 362 are disulfide-linked. N-linked (GlcNAc...) asparagine glycosylation is found at Asn-375 and Asn-388. A helical membrane pass occupies residues 430 to 453 (FGVSIAVGLAAFACVLLVVLFIMI). The Cytoplasmic portion of the chain corresponds to 454-825 (NKYGRRSKFG…ATPIYLDILG (372 aa)). Ser-493 is modified (phosphoserine). The residue at position 516 (Tyr-516) is a Phosphotyrosine; by autocatalysis. The Protein kinase domain maps to 538 to 825 (IVLKRELGEG…ATPIYLDILG (288 aa)). ATP-binding positions include 544-552 (LGEGAFGKV) and Lys-572. Asp-679 acts as the Proton acceptor in catalysis. Phosphotyrosine; by autocatalysis occurs at positions 705, 709, and 710.

The protein belongs to the protein kinase superfamily. Tyr protein kinase family. Insulin receptor subfamily. As to quaternary structure, exists in a dynamic equilibrium between monomeric (low affinity) and dimeric (high affinity) structures. Binds SH2B2. Interacts with SQSTM1 and KIDINS220. Interacts with PTPRS. Interacts with MAPK8IP3/JIP3. Ligand-mediated auto-phosphorylation.

The protein resides in the membrane. The catalysed reaction is L-tyrosyl-[protein] + ATP = O-phospho-L-tyrosyl-[protein] + ADP + H(+). In terms of biological role, receptor tyrosine kinase involved in nervous system and probably heart development. Upon binding of its ligand NTF3/neurotrophin-3, NTRK3 autophosphorylates and activates different signaling pathways, including the phosphatidylinositol 3-kinase/AKT and the MAPK pathways, that control cell survival and differentiation. The sequence is that of NT-3 growth factor receptor (NTRK3) from Saimiri boliviensis boliviensis (Bolivian squirrel monkey).